Consider the following 117-residue polypeptide: Immunoglobulin heavy variable 7-4-1 (117 aa).

Residues 1-19 (MDWTWRILFLVAAATGAHS) form the signal peptide. The tract at residues 20 to 44 (QVQLVQSGSELKKPGASVKVSCKAS) is framework-1. The Ig-like domain maps to 20 to 117 (QVQLVQSGSE…EDTAVYYCAR (98 aa)). A disulfide bridge connects residues Cys41 and Cys115. Residues 45 to 52 (GYTFTSYA) form a complementarity-determining-1 region. The tract at residues 53–69 (MNWVRQAPGQGLEWMGW) is framework-2. Residues 70–77 (INTNTGNP) form a complementarity-determining-2 region. The framework-3 stretch occupies residues 78 to 115 (TYAQGFTGRFVFSLDTSVSTAYLQICSLKAEDTAVYYC). The segment at 116–117 (AR) is complementarity-determining-3.

In terms of assembly, immunoglobulins are composed of two identical heavy chains and two identical light chains; disulfide-linked.

The protein resides in the secreted. It localises to the cell membrane. In terms of biological role, v region of the variable domain of immunoglobulin heavy chains that participates in the antigen recognition. Immunoglobulins, also known as antibodies, are membrane-bound or secreted glycoproteins produced by B lymphocytes. In the recognition phase of humoral immunity, the membrane-bound immunoglobulins serve as receptors which, upon binding of a specific antigen, trigger the clonal expansion and differentiation of B lymphocytes into immunoglobulins-secreting plasma cells. Secreted immunoglobulins mediate the effector phase of humoral immunity, which results in the elimination of bound antigens. The antigen binding site is formed by the variable domain of one heavy chain, together with that of its associated light chain. Thus, each immunoglobulin has two antigen binding sites with remarkable affinity for a particular antigen. The variable domains are assembled by a process called V-(D)-J rearrangement and can then be subjected to somatic hypermutations which, after exposure to antigen and selection, allow affinity maturation for a particular antigen. In Homo sapiens (Human), this protein is Immunoglobulin heavy variable 7-4-1.